The sequence spans 288 residues: Leucine-rich repeat-containing protein 72 (288 aa).

LRR repeat units follow at residues 47–68, 69–90, 91–112, and 113–134; these read DVFE…SRFK, KLKY…TRNY, CLAE…HYLP, and SLHI…VKEL. The region spanning 148–186 is the LRRCT domain; that stretch reads NPLCQYNLYRLYIIYHLPGVELLDRNQVTEKERRSMITL.

This chain is Leucine-rich repeat-containing protein 72 (LRRC72), found in Bos taurus (Bovine).